Reading from the N-terminus, the 764-residue chain is G-type lectin S-receptor-like serine/threonine-protein kinase SD3-1 (764 aa).

A signal peptide spans 1 to 24 (MKMLRALLLCLSLVFFLAFQIVVS). Bulb-type lectin domains lie at 25 to 151 (EIQL…QSFG) and 154 to 279 (TDTL…WKPV). Residues 25–442 (EIQLGSKLVV…TKSHSICIPC (418 aa)) are Extracellular-facing. 3 N-linked (GlcNAc...) asparagine glycosylation sites follow: N92, N198, and N248. The 38-residue stretch at 283 to 320 (VENQCRVFATCGSQVCSFNSSGYTECNCPFNAFVSVSD) folds into the EGF-like; atypical domain. Disulfide bonds link C287–C298, C293–C308, C332–C413, C365–C388, and C369–C375. N-linked (GlcNAc...) asparagine glycosylation is found at N301 and N353. The Apple domain maps to 332–413 (CKSGFNMVKF…LSSISYVKTC (82 aa)). N-linked (GlcNAc...) asparagine glycosylation occurs at N423. Residues 443-463 (LVGATSTTLVLFLGFQLGIVV) form a helical membrane-spanning segment. At 464-764 (YIYRRKKKLA…SESSQSLYEP (301 aa)) the chain is on the cytoplasmic side. The region spanning 466-764 (YRRKKKLAKK…SESSQSLYEP (299 aa)) is the Protein kinase domain. Residues 508-516 (IGPQIFKGV) and K526 contribute to the ATP site. A caM-binding region spans residues 586–603 (LRSKKLTWRIRTDTCLSV). A disordered region spans residues 738–764 (DPPPPPFACARSSPTNSSESSQSLYEP). The span at 749–764 (SSPTNSSESSQSLYEP) shows a compositional bias: low complexity.

Its subcellular location is the cell membrane. It carries out the reaction L-seryl-[protein] + ATP = O-phospho-L-seryl-[protein] + ADP + H(+). It catalyses the reaction L-threonyl-[protein] + ATP = O-phospho-L-threonyl-[protein] + ADP + H(+). The protein is G-type lectin S-receptor-like serine/threonine-protein kinase SD3-1 (SD31) of Arabidopsis thaliana (Mouse-ear cress).